Consider the following 396-residue polypeptide: Tryptophan synthase beta chain (396 aa).

N6-(pyridoxal phosphate)lysine is present on Lys-86.

It belongs to the TrpB family. As to quaternary structure, tetramer of two alpha and two beta chains. The cofactor is pyridoxal 5'-phosphate.

The catalysed reaction is (1S,2R)-1-C-(indol-3-yl)glycerol 3-phosphate + L-serine = D-glyceraldehyde 3-phosphate + L-tryptophan + H2O. It participates in amino-acid biosynthesis; L-tryptophan biosynthesis; L-tryptophan from chorismate: step 5/5. The beta subunit is responsible for the synthesis of L-tryptophan from indole and L-serine. This chain is Tryptophan synthase beta chain, found in Vibrio cholerae serotype O1 (strain ATCC 39315 / El Tor Inaba N16961).